We begin with the raw amino-acid sequence, 150 residues long: Probable deoxyuridine 5'-triphosphate nucleotidohydrolase (150 aa).

The protein belongs to the dCTP deaminase family. Archaeal dUTPase subfamily.

It catalyses the reaction dUTP + H2O = dUMP + diphosphate + H(+). The protein operates within pyrimidine metabolism; dUMP biosynthesis; dUMP from dCTP (dUTP route): step 2/2. This enzyme is involved in nucleotide metabolism: it produces dUMP, the immediate precursor of thymidine nucleotides and it decreases the intracellular concentration of dUTP so that uracil cannot be incorporated into DNA. The protein is Probable deoxyuridine 5'-triphosphate nucleotidohydrolase of Methanothermobacter thermautotrophicus (strain ATCC 29096 / DSM 1053 / JCM 10044 / NBRC 100330 / Delta H) (Methanobacterium thermoautotrophicum).